Reading from the N-terminus, the 183-residue chain is Putative lipoprotein LpqE (183 aa).

The first 30 residues, 1 to 30 (MSRFKISLPALATRVAVLGFLTLMASVLGG), serve as a signal peptide directing secretion. A lipid anchor (N-palmitoyl cysteine) is attached at Cys-31. Cys-31 carries S-diacylglycerol cysteine lipidation.

It is found in the cell membrane. The protein is Putative lipoprotein LpqE (lpqE) of Mycobacterium leprae (strain TN).